We begin with the raw amino-acid sequence, 173 residues long: C-type lectin mosGCTL-7 (173 aa).

Positions 1 to 24 are cleaved as a signal peptide; sequence MVVGWSLLGWALSWLAVATVVVSA. Residues 51 to 167 enclose the C-type lectin domain; that stretch reads NWFKATEYCH…CWDEYYFVCE (117 aa). 2 disulfides stabilise this stretch: C59–C166 and C139–C158. N119 and N144 each carry an N-linked (GlcNAc...) asparagine glycan.

As to quaternary structure, interacts with putative receptor-type tyrosine-protein phosphatase mosPTP-1; the interaction may mediate the recruitment of Japanese encephalitis virus particles in complex with C-type lectin mosGCTL-7 to the cell surface.

The protein localises to the secreted. In terms of biological role, carbohydrate-binding protein. Functionally, (Microbial infection) Facilitates Japanese encephalitis virus infection in mosquitoes. The chain is C-type lectin mosGCTL-7 from Culex quinquefasciatus (Southern house mosquito).